Reading from the N-terminus, the 334-residue chain is Malate dehydrogenase, cytoplasmic (334 aa).

Ser-2 carries the post-translational modification N-acetylserine. Residues 11 to 17 and Asp-42 each bind NAD(+); that span reads GAAGQIA. Residues Arg-92 and Arg-98 each coordinate substrate. Residue Asn-105 coordinates NAD(+). N6-succinyllysine is present on Lys-110. NAD(+) is bound at residue Gln-112. Residues Lys-118 and Lys-121 each carry the N6-acetyllysine modification. 129-131 serves as a coordination point for NAD(+); it reads VGN. Asn-131 and Arg-162 together coordinate substrate. His-187 acts as the Proton acceptor in catalysis. An N6-succinyllysine modification is found at Lys-214. Ser-217 carries the post-translational modification Phosphoserine. The residue at position 230 (Arg-230) is an Omega-N-methylarginine. Ser-241 is modified (phosphoserine). Position 298 is an N6-acetyllysine; alternate (Lys-298). Lys-298 is subject to N6-succinyllysine; alternate. Ser-309 is modified (phosphoserine). Lys-318 bears the N6-succinyllysine mark. 2 positions are modified to phosphoserine: Ser-332 and Ser-333.

Belongs to the LDH/MDH superfamily. MDH type 2 family. As to quaternary structure, homodimer. ISGylated. In terms of processing, acetylation at Lys-118 dramatically enhances enzymatic activity and promotes adipogenic differentiation.

Its subcellular location is the cytoplasm. The protein localises to the cytosol. It catalyses the reaction (S)-malate + NAD(+) = oxaloacetate + NADH + H(+). The catalysed reaction is (2R)-2-hydroxy-3-(4-hydroxyphenyl)propanoate + NAD(+) = 3-(4-hydroxyphenyl)pyruvate + NADH + H(+). It carries out the reaction (S)-2-hydroxyglutarate + NAD(+) = 2-oxoglutarate + NADH + H(+). Its function is as follows. Catalyzes the reduction of aromatic alpha-keto acids in the presence of NADH. Plays essential roles in the malate-aspartate shuttle and the tricarboxylic acid cycle, important in mitochondrial NADH supply for oxidative phosphorylation. Catalyzes the reduction of 2-oxoglutarate to 2-hydroxyglutarate, leading to elevated reactive oxygen species (ROS). This is Malate dehydrogenase, cytoplasmic (Mdh1) from Rattus norvegicus (Rat).